A 297-amino-acid chain; its full sequence is Large ribosomal subunit protein uL18 (297 aa).

The residue at position 2 (Gly2) is an N-acetylglycine. Lys5 and Lys48 each carry N6-acetyllysine. Ser185 is subject to Phosphoserine. Lys220 carries the post-translational modification N6-acetyllysine; alternate. A Glycyl lysine isopeptide (Lys-Gly) (interchain with G-Cter in SUMO1); alternate cross-link involves residue Lys220. A Glycyl lysine isopeptide (Lys-Gly) (interchain with G-Cter in SUMO2); alternate cross-link involves residue Lys220. Phosphothreonine is present on Thr232. A disordered region spans residues Tyr253–Ser297. Basic residues predominate over residues Lys258–Arg268. Residue Ser272 is modified to Phosphoserine.

This sequence belongs to the universal ribosomal protein uL18 family. Component of the large ribosomal subunit (LSU). Part of the 5S RNP complex, which is a LSU subcomplex composed of the 5S RNA, RPL5 and RPL11. Component of a hexameric 5S RNP precursor complex, composed of 5S RNA, RRS1, RPF2/BXDC1, RPL5, RPL11 and HEATR3; this complex acts as a precursor for ribosome assembly. Interacts with NVL in an ATP-dependent manner. Interacts with RRP1B. Interacts with IPO5, IPO7 and KPNB1; these interactions may be involved in RPL5 nuclear import for the assembly of ribosomal subunits. Interacts with RRP1B.

It is found in the cytoplasm. The protein resides in the nucleus. Its subcellular location is the nucleolus. In terms of biological role, component of the ribosome, a large ribonucleoprotein complex responsible for the synthesis of proteins in the cell. The small ribosomal subunit (SSU) binds messenger RNAs (mRNAs) and translates the encoded message by selecting cognate aminoacyl-transfer RNA (tRNA) molecules. The large subunit (LSU) contains the ribosomal catalytic site termed the peptidyl transferase center (PTC), which catalyzes the formation of peptide bonds, thereby polymerizing the amino acids delivered by tRNAs into a polypeptide chain. The nascent polypeptides leave the ribosome through a tunnel in the LSU and interact with protein factors that function in enzymatic processing, targeting, and the membrane insertion of nascent chains at the exit of the ribosomal tunnel. As part of the 5S RNP/5S ribonucleoprotein particle it is an essential component of the LSU, required for its formation and the maturation of rRNAs. It also couples ribosome biogenesis to p53/TP53 activation. As part of the 5S RNP it accumulates in the nucleoplasm and inhibits MDM2, when ribosome biogenesis is perturbed, mediating the stabilization and the activation of TP53. This is Large ribosomal subunit protein uL18 (Rpl5) from Rattus norvegicus (Rat).